A 119-amino-acid polypeptide reads, in one-letter code: Flagellar transcriptional regulator FlhD (119 aa).

This sequence belongs to the FlhD family. Homodimer; disulfide-linked. Forms a heterohexamer composed of two FlhC and four FlhD subunits. Each FlhC binds a FlhD dimer, forming a heterotrimer, and a hexamer assembles by dimerization of two heterotrimers.

It is found in the cytoplasm. Functionally, functions in complex with FlhC as a master transcriptional regulator that regulates transcription of several flagellar and non-flagellar operons by binding to their promoter region. Activates expression of class 2 flagellar genes, including fliA, which is a flagellum-specific sigma factor that turns on the class 3 genes. Also regulates genes whose products function in a variety of physiological pathways. This chain is Flagellar transcriptional regulator FlhD, found in Escherichia fergusonii (strain ATCC 35469 / DSM 13698 / CCUG 18766 / IAM 14443 / JCM 21226 / LMG 7866 / NBRC 102419 / NCTC 12128 / CDC 0568-73).